A 159-amino-acid chain; its full sequence is Transcription elongation factor GreA (159 aa).

A coiled-coil region spans residues Val14–Asn76.

The protein belongs to the GreA/GreB family.

Functionally, necessary for efficient RNA polymerase transcription elongation past template-encoded arresting sites. The arresting sites in DNA have the property of trapping a certain fraction of elongating RNA polymerases that pass through, resulting in locked ternary complexes. Cleavage of the nascent transcript by cleavage factors such as GreA or GreB allows the resumption of elongation from the new 3'terminus. GreA releases sequences of 2 to 3 nucleotides. This is Transcription elongation factor GreA from Clostridium novyi (strain NT).